The sequence spans 588 residues: Adenine deaminase (588 aa).

This sequence belongs to the metallo-dependent hydrolases superfamily. Adenine deaminase family. As to quaternary structure, homodimer. Mn(2+) serves as cofactor.

The enzyme catalyses adenine + H2O + H(+) = hypoxanthine + NH4(+). This chain is Adenine deaminase, found in Escherichia coli (strain SMS-3-5 / SECEC).